The primary structure comprises 274 residues: Orotidine 5'-phosphate decarboxylase (274 aa).

The active-site Proton donor is K96.

Belongs to the OMP decarboxylase family. Type 2 subfamily.

It carries out the reaction orotidine 5'-phosphate + H(+) = UMP + CO2. The protein operates within pyrimidine metabolism; UMP biosynthesis via de novo pathway; UMP from orotate: step 2/2. In Bacteroides fragilis (strain YCH46), this protein is Orotidine 5'-phosphate decarboxylase.